The sequence spans 214 residues: MLGLFRKLLPREDRFFDLFADHSRTVMGAAEALNALLAGGPDIESHCDRIVALENEADEITREVLLAVRRSFITPFDRGDIKDLIQSMDDAIDMMHKTVKTIRLYEQKSFDPGMQAMGAAVVEAAHLVAEAIPLLSRIGANAHRLSAIAEEVTHVEDRSDQLHEQGLKDLFQRHGASNPMAYIIGSEIYGELEKVVDRFEDVANEISGIVIENV.

This sequence belongs to the UPF0111 family.

In terms of biological role, could be involved in orthophosphate transport. The protein is Putative pit accessory protein of Rhizobium meliloti (strain 1021) (Ensifer meliloti).